Consider the following 137-residue polypeptide: Ribonuclease kappa (137 aa).

2 consecutive transmembrane segments (helical) span residues 52–72 and 104–124; these read ACGIVLSAWGVIMLIMLGIFF and VSYNCFIAAGLYLLLGGFSFC.

The protein belongs to the RNase K family. As to quaternary structure, interacts with the proton translocation complex V0 of the V-ATPase. Interacts with ATP6AP1. Widely expressed.

It localises to the endomembrane system. The protein resides in the cytoplasmic vesicle. It is found in the clathrin-coated vesicle membrane. Endoribonuclease which preferentially cleaves ApU and ApG phosphodiester bonds. Hydrolyzes UpU bonds at a lower rate. Regulates the activity of vacuolar (H+)-ATPase (V-ATPase) which is responsible for acidifying and maintaining the pH of intracellular compartments. Required at an early stage of receptor-mediated endocytosis. Functionally, (Microbial infection) Required at an early stage of both clathrin-mediated and clathrin-independent endocytic uptake of a diverse set of viruses, including dengue, West Nile, Sindbis, Rift Valley Fever, influenza, and human rhinoviruses. In Homo sapiens (Human), this protein is Ribonuclease kappa (RNASEK).